The chain runs to 1194 residues: MNGHHQQNGVENMMLFEVVKMGKSAMQSVVDDWIEAYKHSKDVALLDLINFFIQCSGCKGVVSGEMFRHMQNSEIIRRMTEEFDEDSGDYPLTMAGPQWKKFKFSFCEFIGVLVRQCQYSIIYDEYMMDTVISLLTGLSDSQVRAFRHTSTLAAMKLMTALVNVALNLSINMDNTQRQYEAERNKMIGKRANDRLELLLQKRKELQENQDEIENMMNAIFKGVFVHRYRDAIAEIRAICIEEIGVWMKMYSDAFLNDSYLKYVGWTMHDKQGEVRLKCLTALQGLYYNRELNTKLELFTSRFKDRIVSMTLDKEYDVAVQAIKLLTLVLQSSDEVLTAEDCENVYHLVYSAHRPVAVAAGEFLYKKLFSCRDPEEDGIMKRRGRLSPNANLVKTLVFFFLESELHEHAAYLVDSMWDCATELLKDWDCMNSLLLDDPLNGEEALTDRQESALIEILLCTVRQAAECHPPVGRGTGKRVLTAKEKKSQMDDKTHLTELFAVSLPQLLAKYSVDAEKVTNLLQLPQYFDLEIYTTGRLEKHLEALLRQIRNIVEKHTDTDVLEACSKTYHALCNEEFTIYNRVDIAKSQLIDELADKFNRLLEDFLQEEEELDEDDAYQVLSTLKRITAFHNAHDLSRWDLFSGNYKLLKTGIENGDMPEQIVVHALQCTHYVILWQLAKFSETGSSKEELITLKRQMRVFCQICQHYLTNVNTAVKEQAFTILCDVLMIFSHQIVVGGREALEPLVYSPDSSLQSELLSFILDHVFIDQDDDNSSSDGQQDDEASKIEALHKRRNLLAAFCKLIVYNVVEMNTAADIFKQYMRYYNDYGDIIKETMSKTRQIDKIQCAKTLILSLQQLFNEMIQEHSYNFDRSSPTFSAIKELARRFALTFGLDQLKTREAIAMLHKDGIEFAFKEPSPQGEAHPPLNMAFLDILSEFSSKLLRQDKKTVYAYLERFMTFQMSLRREDVWLPLMSYRNSLLAGGDDDTMSVMSGMSGRGSSTRSKKIKPPTGKRKLPEAEESSSSDSMWLNREQTMNTPVMLQTPQLTSTIMREPKRLRPEESYMPVYPMQPEHHQPSLDYNTQVTWMLAQRQQEEAARQQQERAAMNYVKLRSNLQHAIRRNTGLMEDDEEPIVEDVMMSSEGRIEDLNEGMDFDTMDIDLPPSKNRRERTELKPDFFDPASIMDESVLGVSMF.

Residues 224–309 (FVHRYRDAIA…SRFKDRIVSM (86 aa)) enclose the SCD domain. The tract at residues 986-1027 (DTMSVMSGMSGRGSSTRSKKIKPPTGKRKLPEAEESSSSDSM) is disordered. Residues 988-1001 (MSVMSGMSGRGSST) are compositionally biased toward low complexity. Over residues 1002-1013 (RSKKIKPPTGKR) the composition is skewed to basic residues.

Belongs to the SCC3 family. As to quaternary structure, part of the cohesin complex which is composed of a heterodimer between a SMC1 protein (SMC1A or SMC1B) and SMC3, which are attached via their hinge domain, and RAD21 which link them at their heads, and one STAG protein (STAG1, STAG2 or STAG3). In cohesin complexes, STAG2 is mutually exclusive with STAG1 and STAG3. Interacts directly with RAD21 in cohesin complex. In terms of processing, phosphorylated by PLK1. The large dissociation of cohesin from chromosome arms during prophase is partly due to its phosphorylation.

Its subcellular location is the nucleus. It localises to the chromosome. The protein localises to the centromere. Component of cohesin complex, a complex required for the cohesion of sister chromatids after DNA replication. The cohesin complex apparently forms a large proteinaceous ring within which sister chromatids can be trapped. At anaphase, the complex is cleaved and dissociates from chromatin, allowing sister chromatids to segregate. The cohesin complex may also play a role in spindle pole assembly during mitosis. In Xenopus laevis (African clawed frog), this protein is Cohesin subunit SA-2 (stag2).